Here is a 1032-residue protein sequence, read N- to C-terminus: Exo-beta-D-glucosaminidase (1032 aa).

A signal peptide spans 1–32 (MSFRQKRTRIPLLAMTVTALAAAVCGVTTAPA). The propeptide occupies 33-46 (ATGAEVAVPLSVGA). Asp-469 functions as the Proton donor in the catalytic mechanism. Glu-541 serves as the catalytic Nucleophile. The segment at 883–908 (SVRISGWNTGTQTVPADGSGPGPSDP) is disordered. In terms of domain architecture, CBM6 spans 909–1032 (VDYQAEDATI…GGPNVDKITL (124 aa)).

The protein belongs to the glycosyl hydrolase 2 family. In terms of assembly, monomer.

It localises to the secreted. It carries out the reaction Hydrolysis of chitosan or chitosan oligosaccharides to remove successive D-glucosamine residues from the non-reducing termini.. Functionally, hydrolyzes chitosan and chitooligosaccharides with retention of anomeric configuration. Has maximum activity on chitotetraose, chitopentaose and their corresponding alcohols, with a slight decrease in the rate of hydrolysis on longer chains. Has no activity against beta-D-glucopyranoside, beta-D-xylopyranoside, beta-D-mannoside, beta-D-glucuronide, beta-D-galactoside, beta-D-N-acetylgalactosamide, beta-D-N-acetylglucosaminide and alpha-D-N-acetylglucosaminide. In Amycolatopsis orientalis (Nocardia orientalis), this protein is Exo-beta-D-glucosaminidase.